A 118-amino-acid chain; its full sequence is Basic phospholipase A2 PA-15 (118 aa).

7 cysteine pairs are disulfide-bonded: Cys-11-Cys-71, Cys-27-Cys-117, Cys-29-Cys-45, Cys-44-Cys-98, Cys-51-Cys-91, Cys-60-Cys-84, and Cys-78-Cys-89. Residues Tyr-28, Gly-30, and Gly-32 each contribute to the Ca(2+) site. His-48 is an active-site residue. Residue Asp-49 coordinates Ca(2+). Asp-92 is an active-site residue.

The protein belongs to the phospholipase A2 family. Group I subfamily. D49 sub-subfamily. It depends on Ca(2+) as a cofactor. In terms of tissue distribution, expressed by the venom gland.

It localises to the secreted. It carries out the reaction a 1,2-diacyl-sn-glycero-3-phosphocholine + H2O = a 1-acyl-sn-glycero-3-phosphocholine + a fatty acid + H(+). In terms of biological role, PLA2 catalyzes the calcium-dependent hydrolysis of the 2-acyl groups in 3-sn-phosphoglycerides. The chain is Basic phospholipase A2 PA-15 from Pseudechis australis (Mulga snake).